A 239-amino-acid chain; its full sequence is Lactate utilization protein A 1 (239 aa).

This sequence belongs to the LutA/YkgE family.

Its function is as follows. Is involved in L-lactate degradation and allows cells to grow with lactate as the sole carbon source. The chain is Lactate utilization protein A 1 from Bacillus cereus (strain AH820).